Here is a 65-residue protein sequence, read N- to C-terminus: Large ribosomal subunit protein bL35 (65 aa).

Positions 1-28 are disordered; it reads MPKIKTNRGAAKRFRKTGSGKIRRNKAF. Over residues 10-26 the composition is skewed to basic residues; it reads AAKRFRKTGSGKIRRNK.

It belongs to the bacterial ribosomal protein bL35 family.

The chain is Large ribosomal subunit protein bL35 from Syntrophotalea carbinolica (strain DSM 2380 / NBRC 103641 / GraBd1) (Pelobacter carbinolicus).